Reading from the N-terminus, the 182-residue chain is Putative pre-16S rRNA nuclease (182 aa).

Belongs to the YqgF nuclease family.

It localises to the cytoplasm. In terms of biological role, could be a nuclease involved in processing of the 5'-end of pre-16S rRNA. The sequence is that of Putative pre-16S rRNA nuclease from Corynebacterium glutamicum (strain ATCC 13032 / DSM 20300 / JCM 1318 / BCRC 11384 / CCUG 27702 / LMG 3730 / NBRC 12168 / NCIMB 10025 / NRRL B-2784 / 534).